A 170-amino-acid chain; its full sequence is Superoxide dismutase [Fe] (170 aa).

Fe cation-binding residues include His-27, His-81, Asp-163, and His-167.

Belongs to the iron/manganese superoxide dismutase family. Homodimer. Fe cation serves as cofactor.

It catalyses the reaction 2 superoxide + 2 H(+) = H2O2 + O2. Destroys superoxide anion radicals which are normally produced within the cells and which are toxic to biological systems. The sequence is that of Superoxide dismutase [Fe] (sodA) from Raoultella planticola (Klebsiella planticola).